The following is a 137-amino-acid chain: DNA polymerase III subunit psi (137 aa).

Belongs to the DNA polymerase III psi/HolD chain family. The DNA polymerase III holoenzyme complex contains at least 10 different subunits organized into 3 functionally essential subassemblies: the Pol III core, the beta sliding clamp processivity factor and the clamp-loading complex. The Pol III core (subunits alpha, epsilon and theta) contains the polymerase and the 3'-5' exonuclease proofreading activities. The polymerase is tethered to the template via the dimeric beta sliding clamp processivity factor. The clamp-loading complex (also called gamma complex) assembles the beta sliding clamp onto the primed template and plays a central role in the organization and communication at the replication fork. The clamp-loading complex contains delta, delta', psi and chi, and 3 copies of either or both of two different DnaX proteins, gamma and tau. The DNA replisome complex has a single clamp loader (3 tau and 1 each of delta, delta', psi and chi subunits) which binds 3 Pol III cores (1 core on the leading strand and 2 on the lagging strand) each with a beta sliding clamp dimer. Additional proteins in the replisome are other copies of gamma, psi (this protein) and chi (holC), SSB, DNA helicase and RNA primase. The clamp loader hydrolyzes ATP to assemble the beta processivity factor onto the primed template and plays a central role in the organization and communication at the replication fork. Interacts directly with the chi subunit (holC).

The catalysed reaction is DNA(n) + a 2'-deoxyribonucleoside 5'-triphosphate = DNA(n+1) + diphosphate. Its function is as follows. Part of the beta sliding clamp loading complex, which hydrolyzes ATP to load the beta clamp onto primed DNA to form the DNA replication pre-initiation complex. DNA polymerase III is a complex, multichain enzyme responsible for most of the replicative synthesis in bacteria. This DNA polymerase also exhibits 3' to 5' exonuclease activity. This is DNA polymerase III subunit psi from Escherichia coli (strain K12).